Reading from the N-terminus, the 206-residue chain is Ribonuclease HII (206 aa).

Residues 1-206 (MKVLGIDEAG…SWATVQKKKQ (206 aa)) enclose the RNase H type-2 domain. A divalent metal cation is bound by residues Asp7, Glu8, and Asp105.

The protein belongs to the RNase HII family. The cofactor is Mn(2+). Requires Mg(2+) as cofactor.

It localises to the cytoplasm. It catalyses the reaction Endonucleolytic cleavage to 5'-phosphomonoester.. Its function is as follows. Endonuclease that specifically degrades the RNA of RNA-DNA hybrids. The protein is Ribonuclease HII (rnhB) of Methanothermobacter thermautotrophicus (strain ATCC 29096 / DSM 1053 / JCM 10044 / NBRC 100330 / Delta H) (Methanobacterium thermoautotrophicum).